Consider the following 121-residue polypeptide: MIQQESFLTVADNSGAKRIQCIRVLGTNRRYAHVGDVIVAAVKDAMPNMGVKKSDVVKAVVVRTKATLRRETGNSIRFDDNAAVIINDDKNPKGTRVFGPVARELRERSFTKIVSLAPEVI.

It belongs to the universal ribosomal protein uL14 family. Part of the 50S ribosomal subunit. Forms a cluster with proteins L3 and L19. In the 70S ribosome, L14 and L19 interact and together make contacts with the 16S rRNA in bridges B5 and B8.

Binds to 23S rRNA. Forms part of two intersubunit bridges in the 70S ribosome. This is Large ribosomal subunit protein uL14 from Synechococcus sp. (strain CC9902).